A 98-amino-acid polypeptide reads, in one-letter code: MSMVYMNIMLAFTMSLIGLLMYRSHLMSSLLCLEGMMLSLFVMASLMILSTHFTLASMMPIILLVFAACEAALGLALLVMISNTYGTDYVQNLNLLQC.

Transmembrane regions (helical) follow at residues 1-21, 29-49, and 61-81; these read MSMV…GLLM, SLLC…LMIL, and IILL…LVMI.

The protein belongs to the complex I subunit 4L family. In terms of assembly, core subunit of respiratory chain NADH dehydrogenase (Complex I) which is composed of 45 different subunits.

It is found in the mitochondrion inner membrane. The catalysed reaction is a ubiquinone + NADH + 5 H(+)(in) = a ubiquinol + NAD(+) + 4 H(+)(out). Core subunit of the mitochondrial membrane respiratory chain NADH dehydrogenase (Complex I) which catalyzes electron transfer from NADH through the respiratory chain, using ubiquinone as an electron acceptor. Part of the enzyme membrane arm which is embedded in the lipid bilayer and involved in proton translocation. The polypeptide is NADH-ubiquinone oxidoreductase chain 4L (MT-ND4L) (Vicugna pacos (Alpaca)).